We begin with the raw amino-acid sequence, 185 residues long: MMEEIDRFQVPTAHSEMQPLDPAAASISDGDCDAREGESVAMNYKPSPLQVKLEKQRELARKGSLKNGSMGSPVNQQPKKNNVMARTRLVVPNKGYSSLDQSPDEKPLVALDTDSDDDFDMSRYSSSGYSSAEQINQDLNIQLLKDGYRLDEIPDDEDLDLIPPKSVNPTCMCCQATSSTACHIQ.

Met-1 bears the N-acetylmethionine mark. Residues 1 to 131 are disordered; that stretch reads MMEEIDRFQV…SRYSSSGYSS (131 aa). Ser-47 is subject to Phosphoserine. Positions 52–61 are enriched in basic and acidic residues; the sequence is KLEKQRELAR. Residues 66–80 are compositionally biased toward polar residues; that stretch reads KNGSMGSPVNQQPKK. Phosphoserine occurs at positions 72 and 102. A Phosphothreonine modification is found at Thr-113. Ser-115 and Ser-122 each carry phosphoserine. Residues 122–131 show a composition bias toward low complexity; the sequence is SRYSSSGYSS.

Belongs to the FAM219 family.

This Homo sapiens (Human) protein is Protein FAM219A (FAM219A).